A 335-amino-acid chain; its full sequence is UPF0353 protein MMAR_2288 (335 aa).

Helical transmembrane passes span 18-38 (WFFLFIFVIAGLIAVYVVLQL) and 67-87 (IPAMLLALSLVLFTVAMAGPT). One can recognise a VWFA domain in the interval 98–294 (VVMLVIDVSQ…AELNSVYASL (197 aa)). A helical transmembrane segment spans residues 309 to 329 (MGWLRLGALVLVAAALAALLI).

It belongs to the UPF0353 family.

The protein localises to the cell membrane. This Mycobacterium marinum (strain ATCC BAA-535 / M) protein is UPF0353 protein MMAR_2288.